Here is an 87-residue protein sequence, read N- to C-terminus: Prohibitin 1 (87 aa).

The residue at position 8 (Thr8) is a Phosphothreonine. At Lys62 the chain carries N6-acetyllysine. Tyr83 is modified (phosphotyrosine).

It belongs to the prohibitin family. In terms of assembly, the mitochondrial prohibitin complex consists of two subunits (PHB1 and PHB2), assembled into a membrane-associated ring-shaped supercomplex of approximately 1 mDa. Interacts with STOML2. Interacts with MAP1LC3B (membrane-bound form LC3-II); the interaction requires PHB2 and takes place upon Parkin-mediated mitochondrial damage. Interacts with STAT3 (unphosphorylated or phosphorylated at 'Ser-727'). Interacts with CLPB. Interacts with CD86 (via cytoplasmic domain); the interactions increases after priming with CD40.

The protein resides in the mitochondrion inner membrane. The protein localises to the nucleus. Its subcellular location is the cytoplasm. It is found in the cell membrane. Functionally, protein with pleiotropic attributes mediated in a cell-compartment- and tissue-specific manner, which include the plasma membrane-associated cell signaling functions, mitochondrial chaperone, and transcriptional co-regulator of transcription factors in the nucleus. Plays a role in adipose tissue and glucose homeostasis in a sex-specific manner. Contributes to pulmonary vascular remodeling by accelerating proliferation of pulmonary arterial smooth muscle cells. Its function is as follows. In the mitochondria, together with PHB2, forms large ring complexes (prohibitin complexes) in the inner mitochondrial membrane (IMM) and functions as a chaperone protein that stabilizes mitochondrial respiratory enzymes and maintains mitochondrial integrity in the IMM, which is required for mitochondrial morphogenesis, neuronal survival, and normal lifespan. The prohibitin complex, with DNAJC19, regulates cardiolipin remodeling and the protein turnover of OMA1 in a cardiolipin-binding manner. Regulates mitochondrial respiration activity playing a role in cellular aging. The prohibitin complex plays a role of mitophagy receptor involved in targeting mitochondria for autophagic degradation. Involved in mitochondrial-mediated antiviral innate immunity, activates RIG-I-mediated signal transduction and production of IFNB1 and proinflammatory cytokine IL6. In the nucleus, acts as a transcription coregulator, enhances promoter binding by TP53, a transcription factor it activates, but reduces the promoter binding by E2F1, a transcription factor it represses. Interacts with STAT3 to affect IL17 secretion in T-helper Th17 cells. In terms of biological role, in the plasma membrane, cooperates with CD86 to mediate CD86-signaling in B lymphocytes that regulates the level of IgG1 produced through the activation of distal signaling intermediates. Upon CD40 engagement, required to activate NF-kappa-B signaling pathway via phospholipase C and protein kinase C activation. The chain is Prohibitin 1 (PHB1) from Mesocricetus auratus (Golden hamster).